Consider the following 1357-residue polypeptide: DNA-directed RNA polymerase subunit beta (1357 aa).

It belongs to the RNA polymerase beta chain family. The RNAP catalytic core consists of 2 alpha, 1 beta, 1 beta' and 1 omega subunit. When a sigma factor is associated with the core the holoenzyme is formed, which can initiate transcription.

The enzyme catalyses RNA(n) + a ribonucleoside 5'-triphosphate = RNA(n+1) + diphosphate. In terms of biological role, DNA-dependent RNA polymerase catalyzes the transcription of DNA into RNA using the four ribonucleoside triphosphates as substrates. The chain is DNA-directed RNA polymerase subunit beta from Pseudomonas putida (strain GB-1).